The sequence spans 65 residues: Large ribosomal subunit protein bL35 (65 aa).

It belongs to the bacterial ribosomal protein bL35 family.

This is Large ribosomal subunit protein bL35 from Prochlorococcus marinus (strain NATL1A).